A 222-amino-acid chain; its full sequence is Cytidylate kinase (222 aa).

11–19 (GPAGAGKST) provides a ligand contact to ATP.

It belongs to the cytidylate kinase family. Type 1 subfamily.

The protein resides in the cytoplasm. It catalyses the reaction CMP + ATP = CDP + ADP. The enzyme catalyses dCMP + ATP = dCDP + ADP. The sequence is that of Cytidylate kinase from Desulforamulus reducens (strain ATCC BAA-1160 / DSM 100696 / MI-1) (Desulfotomaculum reducens).